The following is a 419-amino-acid chain: D-amino acid dehydrogenase (419 aa).

3–17 (VLILGSGVVGVTSAY) lines the FAD pocket.

It belongs to the DadA oxidoreductase family. It depends on FAD as a cofactor.

The catalysed reaction is a D-alpha-amino acid + A + H2O = a 2-oxocarboxylate + AH2 + NH4(+). It functions in the pathway amino-acid degradation; D-alanine degradation; NH(3) and pyruvate from D-alanine: step 1/1. Oxidative deamination of D-amino acids. This chain is D-amino acid dehydrogenase, found in Chromohalobacter salexigens (strain ATCC BAA-138 / DSM 3043 / CIP 106854 / NCIMB 13768 / 1H11).